The following is a 332-amino-acid chain: CMRF35-like molecule 1 (332 aa).

An N-terminal signal peptide occupies residues 1–18 (MHLSLLALFLFWISGCFT). Residues 19-181 (AQDPVTGPEE…GDGNGFLDLS (163 aa)) lie on the Extracellular side of the membrane. One can recognise an Ig-like V-type domain in the interval 22 to 125 (PVTGPEEVSG…YDHMFKVHVS (104 aa)). Intrachain disulfides connect Cys-41–Cys-109 and Cys-55–Cys-63. N-linked (GlcNAc...) asparagine glycosylation is present at Asn-89. Residues 182–202 (VLLPVISAALLLLLLVVSLIA) form a helical membrane-spanning segment. Residues 203 to 332 (WRMVRRQKKA…EYSSIRRPMP (130 aa)) are Cytoplasmic-facing. Disordered regions lie at residues 251 to 270 (PRTSPLKKGSSMSSSGKDHQ) and 313 to 332 (PRTNLGEETTEYSSIRRPMP).

This sequence belongs to the CD300 family. As to quaternary structure, interacts with PTPN6/SHP-1 in a tyrosine phosphorylation dependent manner. Interacts with IL4R. Phosphorylated on tyrosine.

Its subcellular location is the cell membrane. In terms of biological role, acts as an inhibitory receptor for myeloid cells and mast cells. Positively regulates the phagocytosis of apoptotic cells (efferocytosis) via phosphatidylserine (PS) recognition; recognizes and binds PS as a ligand which is expressed on the surface of apoptotic cells. Plays an important role in the maintenance of immune homeostasis, by promoting macrophage-mediated efferocytosis and by inhibiting dendritic cell-mediated efferocytosis. Negatively regulates Fc epsilon receptor-dependent mast cell activation and allergic responses via binding to ceramide and sphingomyelin which act as ligands. May act as a coreceptor for interleukin 4 (IL-4). Associates with and regulates IL-4 receptor alpha-mediated responses by augmenting IL-4- and IL-13-induced signaling. Negatively regulates the Toll-like receptor (TLR) signaling mediated by MYD88 and TRIF through activation of PTPN6/SHP-1 and PTPN11/SHP-2. Inhibits osteoclast formation. Induces macrophage cell death upon engagement. The polypeptide is CMRF35-like molecule 1 (Cd300lf) (Rattus norvegicus (Rat)).